A 350-amino-acid chain; its full sequence is MGAGASAEEKHSRELEKKLKEDAEKDARTVKLLLLGAGESGKSTIVKQMKIIHQDGYSLEECLEFIAIIYGNTLQSILAIVRAMTTLNIQYGDSARQDDARKLMHMADTIEEGTMPKEMSDIIQRLWKDSGIQACFDRASEYQLNDSAGYYLSDLERLVTPGYVPTEQDVLRSRVKTTGIIETQFSFKDLNFRMFDVGGQRSERKKWIHCFEGVTCIIFIAALSAYDMVLVEDDEVNRMHESLHLFNSICNHRYFATTSIVLFLNKKDVFSEKIKKAHLSICFPDYDGPNTYEDAGNYIKVQFLELNMRRDVKEIYSHMTCATDTQNVKFVFDAVTDIIIKENLKDCGLF.

The segment at 1–21 is disordered; it reads MGAGASAEEKHSRELEKKLKE. Residue G2 is the site of N-myristoyl glycine attachment. A compositionally biased stretch (basic and acidic residues) spans 7-21; sequence AEEKHSRELEKKLKE. The G-alpha domain occupies 28–350; the sequence is RTVKLLLLGA…KENLKDCGLF (323 aa). Residues 31-44 are G1 motif; the sequence is KLLLLGAGESGKST. GTP is bound at residue 36 to 43; the sequence is GAGESGKS. A Mg(2+)-binding site is contributed by S43. Phosphotyrosine is present on Y142. GTP-binding positions include D146, 171–177, G199, 265–268, and A322; these read LRSRVKT and NKKD. The G2 motif stretch occupies residues 169 to 177; it reads DVLRSRVKT. T177 contacts Mg(2+). A G3 motif region spans residues 192-201; it reads FRMFDVGGQR. Residues 261-268 are G4 motif; that stretch reads VLFLNKKD. The G5 motif stretch occupies residues 320–325; sequence TCATDT. The interaction with RHO stretch occupies residues 340 to 350; the sequence is IKENLKDCGLF.

It belongs to the G-alpha family. G(i/o/t/z) subfamily. In terms of assembly, heterotrimeric G proteins are composed of 3 subunits alpha, beta and gamma. The alpha chain contains the guanine nucleotide binding site. Interacts with RHO. Interacts with RGS9 and PDE6G. Interacts (when myristoylated) with UNC119; interaction is required for localization in sensory neurons. In the retina, expressed in the rod photoreceptors.

Its subcellular location is the cell projection. It is found in the cilium. The protein resides in the photoreceptor outer segment. It localises to the membrane. The protein localises to the photoreceptor inner segment. Functionally, functions as a signal transducer for the rod photoreceptor RHO. Required for normal RHO-mediated light perception by the retina. Guanine nucleotide-binding proteins (G proteins) function as transducers downstream of G protein-coupled receptors (GPCRs), such as the photoreceptor RHO. The alpha chain contains the guanine nucleotide binding site and alternates between an active, GTP-bound state and an inactive, GDP-bound state. Activated RHO promotes GDP release and GTP binding. Signaling is mediated via downstream effector proteins, such as cGMP-phosphodiesterase. This Mus musculus (Mouse) protein is Guanine nucleotide-binding protein G(t) subunit alpha-1 (Gnat1).